We begin with the raw amino-acid sequence, 148 residues long: Large ribosomal subunit protein uL15 (148 aa).

Residues 1 to 30 (MTHSKRNTRKLRGHVSHGHGRVGKHRKHPG) are compositionally biased toward basic residues. The segment at 1 to 38 (MTHSKRNTRKLRGHVSHGHGRVGKHRKHPGGRGMAGPE) is disordered.

The protein belongs to the universal ribosomal protein uL15 family.

In Euplotes crassus, this protein is Large ribosomal subunit protein uL15 (RPL27A).